The following is a 534-amino-acid chain: Unguisins hydrolase ungD' (534 aa).

The protein belongs to the peptidase S12 family.

Its pathway is secondary metabolite biosynthesis. Its function is as follows. Hydrolase; part of the gene cluster that mediates the biosynthesis of the unguisins, gamma-aminobutyric acid (GABA)-containing fungal cyclic heptapeptides with the amino acid sequence cyclo-(D-Ala1-D-Val2-L-Leu3-beta-MePhe4-D-Ala5-D-Trp6-GABA7) for unguisin H and cyclo-(D-Ala1-D-Ala2-L-Leu3-beta-MePhe4-D-Ala5-D-Trp6-GABA7) for unguisin I. Within the pathway, the hydrolase ungD' catalyzes the hydrolysis between the D-tryptophan and GABA residues of unguisins H and I to produce the corresponding linear peptides. The alanine racemase ungC' catalyzes the interconversion of L-alanine and D-alanine, providing the D-alanine which is accepted by the first adenylation domain of the nonribosomal peptide synthetase (NRPS) ungA', whereas the methyltransferase ungE' provides the (2R,3R)-beta-methylphenylalanine residue incorporated by the module 4. UngA' is the main enzyme within the cluster which condenses the 7 residues using its respective 7 modules. The terminal condensation domain (Ct) is involved in cyclization with D-alanine and thereby releasing of unguisins H and I. This is Unguisins hydrolase ungD' from Aspergillus campestris (strain IBT 28561).